The primary structure comprises 134 residues: Probable salivary secreted peptide (134 aa).

The first 24 residues, 1 to 24 (MGAQKTIAYLAIIAIAVIFAQVNT), serve as a signal peptide directing secretion.

It is found in the secreted. The sequence is that of Probable salivary secreted peptide from Bombus ignitus (Bumblebee).